A 745-amino-acid chain; its full sequence is Interleukin-17 receptor D (745 aa).

An N-terminal signal peptide occupies residues 1-26; it reads MAGSRRLAHFFMASCLFLCYTASVNG. Topologically, residues 27–298 are extracellular; it reads GKRGNSDKCS…VHSPWAGPIR (272 aa). N-linked (GlcNAc...) asparagine glycans are attached at residues Asn-61, Asn-79, Asn-136, Asn-170, Asn-205, and Asn-276. Residues 299-319 traverse the membrane as a helical segment; that stretch reads AMAITVPLVIMSAFATLFTVM. Over 320–745 the chain is Cytoplasmic; the sequence is CRKKQQENIY…SEGLIAAAST (426 aa). The SEFIR domain maps to 354 to 518; that stretch reads RPKIFICYSS…LMDQLPQLFA (165 aa). Disordered regions lie at residues 432–454 and 631–713; these read RHRKGKATSKEKNREPSASDSSS and REDL…PPAV. The span at 439–448 shows a compositional bias: basic and acidic residues; sequence TSKEKNREPS. The segment covering 693–705 has biased composition (low complexity); that stretch reads SSLADSVSSSSGL.

As to quaternary structure, interacts with fgfr1 and fgfr2.

The protein resides in the membrane. Feedback inhibitor of fibroblast growth factor mediated Ras-MAPK signaling and ERK activation. May inhibit FGF-induced FGFR1 tyrosine phosphorylation. The sequence is that of Interleukin-17 receptor D (il17rd) from Danio rerio (Zebrafish).